Consider the following 110-residue polypeptide: MIETIASKLLVQNVSQYFILSFILLGIGLFGMMVRKNLITILMSLELALNSVNIAFVGIDRLNHLIDGEIFALFTIALAAAEAAVGLGIILSLFRLRKAENVNEIIDLKG.

The next 3 membrane-spanning stretches (helical) occupy residues 14 to 34 (VSQY…GMMV), 39 to 59 (ITIL…FVGI), and 70 to 90 (IFAL…LGII).

Belongs to the complex I subunit 4L family. NDH-1 is composed of 14 different subunits. Subunits NuoA, H, J, K, L, M, N constitute the membrane sector of the complex.

Its subcellular location is the cell inner membrane. The enzyme catalyses a quinone + NADH + 5 H(+)(in) = a quinol + NAD(+) + 4 H(+)(out). Functionally, NDH-1 shuttles electrons from NADH, via FMN and iron-sulfur (Fe-S) centers, to quinones in the respiratory chain. The immediate electron acceptor for the enzyme in this species is believed to be ubiquinone. Couples the redox reaction to proton translocation (for every two electrons transferred, four hydrogen ions are translocated across the cytoplasmic membrane), and thus conserves the redox energy in a proton gradient. The protein is NADH-quinone oxidoreductase subunit K of Hydrogenobaculum sp. (strain Y04AAS1).